Consider the following 197-residue polypeptide: Guanylate kinase (197 aa).

A Guanylate kinase-like domain is found at 10-187 (GSLFIVSAPA…AYQVLRSILI (178 aa)). Position 17–24 (17–24 (APAGTGKT)) interacts with ATP.

This sequence belongs to the guanylate kinase family.

The protein resides in the cytoplasm. The catalysed reaction is GMP + ATP = GDP + ADP. Its function is as follows. Essential for recycling GMP and indirectly, cGMP. The protein is Guanylate kinase of Protochlamydia amoebophila (strain UWE25).